The primary structure comprises 215 residues: 3-isopropylmalate dehydratase small subunit (215 aa).

It belongs to the LeuD family. LeuD type 1 subfamily. In terms of assembly, heterodimer of LeuC and LeuD.

The catalysed reaction is (2R,3S)-3-isopropylmalate = (2S)-2-isopropylmalate. Its pathway is amino-acid biosynthesis; L-leucine biosynthesis; L-leucine from 3-methyl-2-oxobutanoate: step 2/4. In terms of biological role, catalyzes the isomerization between 2-isopropylmalate and 3-isopropylmalate, via the formation of 2-isopropylmaleate. In Xylella fastidiosa (strain 9a5c), this protein is 3-isopropylmalate dehydratase small subunit.